We begin with the raw amino-acid sequence, 578 residues long: Vi polysaccharide biosynthesis protein VipC/TviE (578 aa).

It functions in the pathway glycan metabolism; Vi-antigen biosynthesis. The protein operates within capsule biogenesis; capsule polysaccharide biosynthesis. This is Vi polysaccharide biosynthesis protein VipC/TviE (vipC) from Salmonella typhi.